The sequence spans 485 residues: Probable phosphomannomutase (485 aa).

The Phosphoserine intermediate role is filled by Ser86. Mg(2+)-binding residues include Ser86, Asp236, Asp238, and Asp240.

It belongs to the phosphohexose mutase family. Mg(2+) serves as cofactor.

The enzyme catalyses alpha-D-mannose 1-phosphate = D-mannose 6-phosphate. The sequence is that of Probable phosphomannomutase from Haemophilus influenzae (strain ATCC 51907 / DSM 11121 / KW20 / Rd).